Reading from the N-terminus, the 284-residue chain is MTLLSTLRGISSPARQQPGTQSESRRGGDTLAERGLAVAGVSHGFDGTAVLESVTLAVDRGETVAIIGPSGTGKTTLLRLLALFSEPDDGTIGLDGTDVWRQSERQRLAARRRIGMVFQKANLFDTTVRRNVRYGLSVRRSWRERLRSWLGGRKRQESVFEALDIVGLADAASQSASSLSGGEAQRVAFARALAYDPDFLLLDEPTSDLDPRNTAVIEEAVDAARSRGLGVAVATHDMHQARRIADRIVVLLDGQVIEAGPTERVFSDPDDARARKFINGELVY.

The segment covering 1-22 has biased composition (polar residues); sequence MTLLSTLRGISSPARQQPGTQS. Residues 1–29 are disordered; sequence MTLLSTLRGISSPARQQPGTQSESRRGGD. The 243-residue stretch at 36-278 folds into the ABC transporter domain; it reads LAVAGVSHGF…PDDARARKFI (243 aa). Residue 68–75 participates in ATP binding; it reads GPSGTGKT.

The protein belongs to the ABC transporter superfamily. Phosphate importer (TC 3.A.1.7) family. The complex is composed of two ATP-binding proteins (PstB), two transmembrane proteins (PstC and PstA) and a solute-binding protein (PstS).

It localises to the cell membrane. It catalyses the reaction phosphate(out) + ATP + H2O = ADP + 2 phosphate(in) + H(+). In terms of biological role, part of the ABC transporter complex PstSACB involved in phosphate import. Responsible for energy coupling to the transport system. The sequence is that of Phosphate import ATP-binding protein PstB 2 from Natronomonas pharaonis (strain ATCC 35678 / DSM 2160 / CIP 103997 / JCM 8858 / NBRC 14720 / NCIMB 2260 / Gabara) (Halobacterium pharaonis).